The primary structure comprises 801 residues: U-box domain-containing protein 44 (801 aa).

Residues 22–101 (HIYEAFICPL…EEWRSRNDAA (80 aa)) enclose the U-box domain. ARM repeat units follow at residues 134-173 (RSNRHGVRNSQLIHMIIDMLKSTSHRVRYKALQTLQVVVE), 176-215 (DESKAIVAEGDTVRTLVKFLSHEPSKGREAAVSLLFELSK), 218-259 (ALCE…NMER), 261-300 (EEIVRQMASYGRLQPLLGKLLEGSPETKLSMASFLGELPL), 301-340 (NNDVKVLVAQTVGSSLVDLMRSGDMPQREAALKALNKISS), 342-386 (EGSA…NIVN), 390-429 (DFDKATLVSENRVENLLHLISNTGPAIQCKLLEVLVGLTS), 435-475 (PKVV…NLSP), and 480-521 (ELAK…ELPD).

In terms of assembly, interacts with AAO3. Binds to SD129. In terms of tissue distribution, expressed in leaves, root vasculature and guard cells.

The catalysed reaction is S-ubiquitinyl-[E2 ubiquitin-conjugating enzyme]-L-cysteine + [acceptor protein]-L-lysine = [E2 ubiquitin-conjugating enzyme]-L-cysteine + N(6)-ubiquitinyl-[acceptor protein]-L-lysine.. Its pathway is protein modification; protein ubiquitination. Its function is as follows. Functions as an E3 ubiquitin-protein ligase. Prevents premature senescence probably by targeting proteins involved in this process for degradation. Promotes the degradation of AAO3 and thus represses abscisic acid (ABA) biosynthesis. This Arabidopsis thaliana (Mouse-ear cress) protein is U-box domain-containing protein 44 (PUB44).